Here is a 484-residue protein sequence, read N- to C-terminus: UDP-N-acetylmuramoyl-L-alanyl-D-glutamate--L-lysine ligase (484 aa).

Position 43 (S43) interacts with UDP-N-acetyl-alpha-D-muramoyl-L-alanyl-D-glutamate. 119-125 provides a ligand contact to ATP; sequence GTKGKTT. Residues 161–162, S188, and R196 contribute to the UDP-N-acetyl-alpha-D-muramoyl-L-alanyl-D-glutamate site; that span reads TT. N6-carboxylysine is present on K230. Residues 405-408 carry the L-lysine recognition motif motif; it reads DDPN.

This sequence belongs to the MurCDEF family. MurE subfamily. Post-translationally, carboxylation is probably crucial for Mg(2+) binding and, consequently, for the gamma-phosphate positioning of ATP.

It is found in the cytoplasm. The enzyme catalyses UDP-N-acetyl-alpha-D-muramoyl-L-alanyl-D-glutamate + L-lysine + ATP = UDP-N-acetyl-alpha-D-muramoyl-L-alanyl-gamma-D-glutamyl-L-lysine + ADP + phosphate + H(+). It functions in the pathway cell wall biogenesis; peptidoglycan biosynthesis. In terms of biological role, catalyzes the addition of L-lysine to the nucleotide precursor UDP-N-acetylmuramoyl-L-alanyl-D-glutamate (UMAG) in the biosynthesis of bacterial cell-wall peptidoglycan. The protein is UDP-N-acetylmuramoyl-L-alanyl-D-glutamate--L-lysine ligase of Streptococcus agalactiae serotype V (strain ATCC BAA-611 / 2603 V/R).